We begin with the raw amino-acid sequence, 633 residues long: DEAD-box ATP-dependent RNA helicase 37 (633 aa).

Residues 1–110 (MSASWADVAD…WNNRSGGWDR (110 aa)) are disordered. At S2 the chain carries N-acetylserine. A compositionally biased stretch (polar residues) spans 11–25 (SENTGSGSSNQNSHP). Gly residues-rich tracts occupy residues 68–80 (GGSGVGVGGGGGY) and 87–101 (PGSGSGYGGRGGGGW). Residues 159–187 (NTFAEIDLGEALNLNIRRCKYVKPTPVQR) carry the Q motif motif. A Helicase ATP-binding domain is found at 190 to 374 (IPILLEGRDL…ADFLANYIFL (185 aa)). 203 to 210 (AQTGSGKT) serves as a coordination point for ATP. Positions 318–321 (DEAD) match the DEAD box motif. Residues 401–552 (HLMDLLHAQR…EVPEWLTRYA (152 aa)) enclose the Helicase C-terminal domain. A disordered region spans residues 555-600 (SSFGGGKNRRSGGRFGGRDFRREGSFGSGRGGYGGGGGGYGGGGGY). Positions 580-600 (FGSGRGGYGGGGGGYGGGGGY) are enriched in gly residues.

The protein belongs to the DEAD box helicase family. DDX3/DED1 subfamily.

It catalyses the reaction ATP + H2O = ADP + phosphate + H(+). The sequence is that of DEAD-box ATP-dependent RNA helicase 37 (RH37) from Arabidopsis thaliana (Mouse-ear cress).